The sequence spans 411 residues: Putative polysaccharide ligase RC0486 (411 aa).

The next 10 helical transmembrane spans lie at 15-35 (LGML…LISF), 78-98 (GITM…IHLI), 101-121 (LATF…SNSA), 133-153 (LIFG…SNGF), 166-186 (MLDR…IILL), 207-227 (ISDS…FILT), 233-253 (IFFK…PVIA), 328-348 (ILQI…CLVY), 361-381 (NFKA…MISY), and 383-403 (IWQI…KLLV).

It belongs to the O-antigen ligase family.

It is found in the membrane. The protein is Putative polysaccharide ligase RC0486 of Rickettsia conorii (strain ATCC VR-613 / Malish 7).